The chain runs to 750 residues: Polyribonucleotide nucleotidyltransferase (750 aa).

Mg(2+)-binding residues include Asp492 and Asp498. Positions Pro559 to Val618 constitute a KH domain. The S1 motif domain occupies Gly628–Lys695. The interval Glu705–Arg750 is disordered. Residues Lys717–Arg750 show a composition bias toward basic and acidic residues.

This sequence belongs to the polyribonucleotide nucleotidyltransferase family. Mg(2+) serves as cofactor.

Its subcellular location is the cytoplasm. The catalysed reaction is RNA(n+1) + phosphate = RNA(n) + a ribonucleoside 5'-diphosphate. Its function is as follows. Involved in mRNA degradation. Catalyzes the phosphorolysis of single-stranded polyribonucleotides processively in the 3'- to 5'-direction. This is Polyribonucleotide nucleotidyltransferase from Oleidesulfovibrio alaskensis (strain ATCC BAA-1058 / DSM 17464 / G20) (Desulfovibrio alaskensis).